The following is a 262-amino-acid chain: Expansin-A21 (262 aa).

An N-terminal signal peptide occupies residues 1–29; that stretch reads MKLLEKMTYVECFMIIMATWFMFISYSHG. The Expansin-like EG45 domain occupies 64–169; the sequence is EGACGYGDLN…RRVPCAKTGG (106 aa). The Expansin-like CBD domain occupies 179 to 258; sequence NILTILPYNV…SWGFGQTFDG (80 aa).

The protein belongs to the expansin family. Expansin A subfamily.

Its subcellular location is the secreted. The protein localises to the cell wall. It localises to the membrane. Its function is as follows. Causes loosening and extension of plant cell walls by disrupting non-covalent bonding between cellulose microfibrils and matrix glucans. No enzymatic activity has been found. In Arabidopsis thaliana (Mouse-ear cress), this protein is Expansin-A21 (EXPA21).